A 209-amino-acid polypeptide reads, in one-letter code: Uracil phosphoribosyltransferase (209 aa).

5-phospho-alpha-D-ribose 1-diphosphate is bound by residues Arg79, Arg104, and 131 to 139; that span reads DPMLATGGS. Uracil-binding positions include Ile194 and 199–201; that span reads GDA. A 5-phospho-alpha-D-ribose 1-diphosphate-binding site is contributed by Asp200.

Belongs to the UPRTase family. Requires Mg(2+) as cofactor.

It carries out the reaction UMP + diphosphate = 5-phospho-alpha-D-ribose 1-diphosphate + uracil. It participates in pyrimidine metabolism; UMP biosynthesis via salvage pathway; UMP from uracil: step 1/1. With respect to regulation, allosterically activated by GTP. In terms of biological role, catalyzes the conversion of uracil and 5-phospho-alpha-D-ribose 1-diphosphate (PRPP) to UMP and diphosphate. The protein is Uracil phosphoribosyltransferase of Enterococcus faecalis (strain ATCC 700802 / V583).